Here is a 405-residue protein sequence, read N- to C-terminus: Macrolide efflux protein A (405 aa).

11 consecutive transmembrane segments (helical) span residues 14–34 (IWAG…AIIF), 48–68 (MASL…GVLV), 76–98 (IMIG…AFYM), 145–165 (SLQS…YSVW), 168–188 (NAII…VAIV), 222–242 (FALL…NALF), 259–279 (ITEI…GLFG), 285–305 (ILLI…SGLL), 310–330 (FFIF…YSGV), 350–370 (LTGS…ALFA), and 373–393 (IGVN…AIVC).

The protein belongs to the major facilitator superfamily. Drug:H(+) antiporter-3 (DHA3) (TC 2.A.1.21) family.

Its subcellular location is the cell membrane. Its function is as follows. Confers resistance to 14-membered macrolides including erythromycin and to 15-membered macrolides but not to 16-membered macrolides, lincosamides or analogs of streptogramin B. May function as an efflux pump to regulate intracellular macrolide levels. The sequence is that of Macrolide efflux protein A from Streptococcus pyogenes serotype M6 (strain ATCC BAA-946 / MGAS10394).